The chain runs to 245 residues: MGDSRALLDSEEYPNTEAQKDRVLTLEEWQEKWVNHKTGFHQEQGHQLLKKYLDTFLKGEKALRVFFPLCGKAVEMKWFADRGHSVVGVEISELGIRDFFTEQNLSYSEEPIMEIPGAKIFKSSSGNISLYCCNLFDLPRANIGKFDRIWDRGALVAVNPSDRKRYSDVMLSLTRPGFRYLLSVFSYDPTKHAGPPFYVTDGEVKKLFGSVCNIQCLEKVDVFEERHKSWGIDQIIERLYLFTEK.

An S-adenosyl-L-methionine-binding site is contributed by 29–40; sequence WQEKWVNHKTGF. Phe40 is a substrate binding site. Lys58 is modified (N6-acetyllysine). The S-adenosyl-L-methionine site is built by Leu69, Glu90, and Arg152.

The protein belongs to the class I-like SAM-binding methyltransferase superfamily. TPMT family. As to quaternary structure, monomer.

It localises to the cytoplasm. It carries out the reaction S-adenosyl-L-methionine + a thiopurine = S-adenosyl-L-homocysteine + a thiopurine S-methylether.. This Bos taurus (Bovine) protein is Thiopurine S-methyltransferase (TPMT).